A 136-amino-acid chain; its full sequence is Large ribosomal subunit protein bL17 (136 aa).

It belongs to the bacterial ribosomal protein bL17 family. In terms of assembly, part of the 50S ribosomal subunit. Contacts protein L32.

This is Large ribosomal subunit protein bL17 from Methylobacterium radiotolerans (strain ATCC 27329 / DSM 1819 / JCM 2831 / NBRC 15690 / NCIMB 10815 / 0-1).